A 78-amino-acid chain; its full sequence is RNA-binding protein Hfq (78 aa).

Residues 10–69 (DPFLNTLRKEHVPVSIYLVNGIKLQGQIESFDQYVVLLRNTVTQMVYKHAISTVVPARAV) enclose the Sm domain.

Belongs to the Hfq family. Homohexamer.

Its function is as follows. RNA chaperone that binds small regulatory RNA (sRNAs) and mRNAs to facilitate mRNA translational regulation in response to envelope stress, environmental stress and changes in metabolite concentrations. Also binds with high specificity to tRNAs. This is RNA-binding protein Hfq from Bordetella avium (strain 197N).